The following is a 143-amino-acid chain: Beta/delta-urticatoxin-Uf2a (143 aa).

Positions 1–18 are cleaved as a signal peptide; that stretch reads MGAIVLVALMALVASSSA. A propeptide spanning residues 19–80 is cleaved from the precursor; sequence FSDIEHNIMK…MMLSGRPQPN (62 aa). 6 disulfides stabilise this stretch: C83-C100, C90-C105, C99-C113, C115-C129, C122-C134, and C128-C142.

This sequence belongs to the urticatoxin-2 family. Expressed in trichomes, that are stiff epidermal hairs located on the surface of petioles and leaves.

It localises to the secreted. In terms of biological role, plant defense neurotoxin that causes pain and systemic symptoms in mammals via modulation of voltage-gated sodium channels (Nav). Potent modulator of human Nav1.5/SCN5A (EC(50)=55 nM), Nav1.6/SCN8A (EC(50)=0.86 nM), and Nav1.7/SCN9A (EC(50)=208 nM), where it shifts the activation threshold to more negative potentials and delays fast inactivation. Also shifts the voltage-dependence of steady-state fast inactivation of Nav1.6/SCN8A, but not that of Nav1.5/SCN5A or Nav1.7/SCN9A. On Nav1.7/SCN9A, principally acts by binding to extracellular loops of domain IV (Nav site 3). Does not affect current response of the tetrodotoxin (TTX)-resistant Nav1.8/SCN10A sodium channel. In vivo, intraplantar injection into mice causes numerous dose-dependent, immediate, and long-lasting spontaneous pain behaviors, while no swelling is observed in the injected paw. At the highest doses tested, systemic symptoms including hypokinesia and hypersalivation are observed. The polypeptide is Beta/delta-urticatoxin-Uf2a (Urtica ferox (Tree nettle)).